The primary structure comprises 240 residues: ATP synthase subunit a 1 (240 aa).

The next 5 membrane-spanning stretches (helical) occupy residues 23-43, 82-102, 120-140, 186-206, and 207-227; these read GQVL…SVLA, VPFI…GALF, DINT…YAGF, LVVA…VMLL, and GLFT…AYIH.

It belongs to the ATPase A chain family. As to quaternary structure, F-type ATPases have 2 components, CF(1) - the catalytic core - and CF(0) - the membrane proton channel. CF(1) has five subunits: alpha(3), beta(3), gamma(1), delta(1), epsilon(1). CF(0) has four main subunits: a, b, b' and c.

The protein localises to the cellular thylakoid membrane. Key component of the proton channel; it plays a direct role in the translocation of protons across the membrane. In Acaryochloris marina (strain MBIC 11017), this protein is ATP synthase subunit a 1.